Here is a 574-residue protein sequence, read N- to C-terminus: Frizzled-7 (574 aa).

Residues 1 to 32 (MRDPGAAAPLSSLGLCALVLALLGALSAGAGA) form the signal peptide. Residues 33–256 (QPYHGEKGIS…EEERRFARLW (224 aa)) are Extracellular-facing. One can recognise an FZ domain in the interval 44-163 (PDHGFCQPIS…HGAGEICVGQ (120 aa)). 5 disulfides stabilise this stretch: C49–C110, C57–C103, C94–C131, C120–C160, and C124–C148. N-linked (GlcNAc...) asparagine glycosylation is present at N63. N164 carries an N-linked (GlcNAc...) asparagine glycan. Residues 257 to 277 (VGVWSVLCCASTLFTVLTYLV) form a helical membrane-spanning segment. Residues 278 to 288 (DMRRFSYPERP) are Cytoplasmic-facing. Residues 289–309 (IIFLSGCYFMVAVAHVAGFLL) form a helical membrane-spanning segment. The Extracellular segment spans residues 310 to 336 (EDRAVCVERFSDDGYRTVAQGTKKEGC). The chain crosses the membrane as a helical span at residues 337-357 (TILFMVLYFFGMASSIWWVIL). The Cytoplasmic portion of the chain corresponds to 358–379 (SLTWFLAAGMKWGHEAIEANSQ). A helical membrane pass occupies residues 380–400 (YFHLAAWAVPAVKTITILAMG). Topologically, residues 401–423 (QVDGDLLSGVCYVGLSSVDALRG) are extracellular. The chain crosses the membrane as a helical span at residues 424–444 (FVLAPLFVYLFIGTSFLLAGF). Over 445–470 (VSLFRIRTIMKHDGTKTEKLEKLMVR) the chain is Cytoplasmic. The helical transmembrane segment at 471–491 (IGVFSVLYTVPATIVLACYFY) threads the bilayer. Topologically, residues 492 to 528 (EQAFREHWERTWLLQTCKSYAVPCPPGHFPPMSPDFT) are extracellular. A helical transmembrane segment spans residues 529–549 (VFMIKYLMTMIVGITTGFWIW). The Cytoplasmic segment spans residues 550-574 (SGKTLQSWRRFYHRLSHSSKGETAV). The short motif at 552–557 (KTLQSW) is the Lys-Thr-X-X-X-Trp motif, mediates interaction with the PDZ domain of Dvl family members element. Residues 572-574 (TAV) carry the PDZ-binding motif.

The protein belongs to the G-protein coupled receptor Fz/Smo family. Interacts with MAGI3. Interacts with DVL1. Interacts with CCDC88C/DAPLE; the interaction displaces DVL1 from FZD7, leading to inhibition of canonical Wnt signaling and triggering of non-canonical Wnt responses. Interacts with MYOC. Binds to SDCBP; this interaction is increased by inositol trisphosphate (IP3). Interacts with glypican GPC3. As to quaternary structure, (Microbial infection) Interacts with C.difficile toxin TcdB; frizzled receptors constitute the major host receptors for TcdB in the colonic epithelium. Ubiquitinated by ZNRF3, leading to its degradation by the proteasome. As to expression, high expression in adult skeletal muscle and fetal kidney, followed by fetal lung, adult heart, brain, and placenta. Specifically expressed in squamous cell esophageal carcinomas.

It is found in the cell membrane. The protein resides in the endosome membrane. Functionally, receptor for Wnt proteins. Most frizzled receptors are coupled to the beta-catenin canonical signaling pathway, which leads to the activation of disheveled proteins, inhibition of GSK-3 kinase, nuclear accumulation of beta-catenin and activation of Wnt target genes. A second signaling pathway involving PKC and calcium fluxes has been seen for some family members, but it is not yet clear if it represents a distinct pathway or if it can be integrated in the canonical pathway, as PKC seems to be required for Wnt-mediated inactivation of GSK-3 kinase. Both pathways seem to involve interactions with G-proteins. Activation by WNT8 induces expression of beta-catenin target genes. Following ligand activation, binds to CCDC88C/DAPLE which displaces DVL1 from FZD7 and leads to inhibition of canonical Wnt signaling, activation of G-proteins by CCDC88C and triggering of non-canonical Wnt responses. May be involved in transduction and intercellular transmission of polarity information during tissue morphogenesis and/or in differentiated tissues. Its function is as follows. (Microbial infection) Acts as a receptor for C.difficile toxin TcdB in the colonic epithelium. In Homo sapiens (Human), this protein is Frizzled-7 (FZD7).